We begin with the raw amino-acid sequence, 253 residues long: MVLIRVLANLLILQLSYAQKSSELVIGGDECNINEHRFLAIVHTDISLCTGTLINQEWVLTAAHCDRGDILVLLGVHRLKDVQTRVAKEKFICPNRKKDNEKDKDIMLIRLDSPVNNSTHIAPLSLPSNPPSVGSVCRIMGWGAITSPNVTFPGVPHCADINIFDYEVCRAAKPELPATSRTLCAGILEGGKGSCDGDSGGPLICNGEIQGIVSWGGDICAQPREPGHYTKVFDYTDWIQSIIAGNTDVTCPP.

The signal sequence occupies residues 1–18; sequence MVLIRVLANLLILQLSYA. Positions 19–24 are excised as a propeptide; sequence QKSSEL. A Peptidase S1 domain is found at 25–244; the sequence is VIGGDECNIN…YTDWIQSIIA (220 aa). 6 disulfides stabilise this stretch: C31/C158, C49/C65, C93/C251, C137/C205, C169/C184, and C195/C220. Active-site charge relay system residues include H64 and D105. 3 N-linked (GlcNAc...) asparagine glycosylation sites follow: N116, N117, and N149. S199 serves as the catalytic Charge relay system.

This sequence belongs to the peptidase S1 family. Snake venom subfamily. In terms of assembly, monomer. In terms of tissue distribution, expressed by the venom gland.

The protein localises to the secreted. Snake venom serine protease that may act in the hemostasis system of the prey. The sequence is that of Snake venom serine proteinase 14 from Crotalus adamanteus (Eastern diamondback rattlesnake).